Consider the following 122-residue polypeptide: uncharacterized protein (122 aa).

Positions 1 to 18 (MYSMAFLASSGLVANSSA) are cleaved as a signal peptide. A glycan (N-linked (GlcNAc...) asparagine) is linked at Asn-15.

This is an uncharacterized protein from Saccharomyces cerevisiae (strain ATCC 204508 / S288c) (Baker's yeast).